The following is an 82-amino-acid chain: Turripeptide Gdm9.1 (82 aa).

The first 23 residues, 1–23 (MMAKLMITVMMVLLLSLQQGADG), serve as a signal peptide directing secretion. Residues 24-46 (RSERWRKNQMAASRIMRNLITAR) constitute a propeptide that is removed on maturation. P49 and P50 each carry 4-hydroxyproline. Intrachain disulfides connect C53/C68, C58/C72, and C64/C79. A 4-carboxyglutamate mark is found at E60 and E63.

The protein belongs to the Pg turripeptide superfamily. In terms of tissue distribution, expressed by the venom duct.

Its subcellular location is the secreted. This Gemmula diomedea (Gem-turris) protein is Turripeptide Gdm9.1.